The following is a 78-amino-acid chain: Acyl carrier protein (78 aa).

The Carrier domain maps to Asp2–Gln77. The residue at position 37 (Ser37) is an O-(pantetheine 4'-phosphoryl)serine.

This sequence belongs to the acyl carrier protein (ACP) family. In terms of processing, 4'-phosphopantetheine is transferred from CoA to a specific serine of apo-ACP by AcpS. This modification is essential for activity because fatty acids are bound in thioester linkage to the sulfhydryl of the prosthetic group.

It localises to the cytoplasm. Its pathway is lipid metabolism; fatty acid biosynthesis. Functionally, carrier of the growing fatty acid chain in fatty acid biosynthesis. The chain is Acyl carrier protein from Treponema denticola (strain ATCC 35405 / DSM 14222 / CIP 103919 / JCM 8153 / KCTC 15104).